A 1404-amino-acid chain; its full sequence is ABC transporter G family member 47 (1404 aa).

The ABC transporter 1 domain maps to 156–423 (GNALHITRKK…FQSIGFKCPE (268 aa)). 189 to 196 (GPPGSGKT) lines the ATP pocket. Residues 501 to 714 (ELLQANIDRE…ALNTLAVNEF (214 aa)) form the ABC transmembrane type-2 1 domain. 7 helical membrane passes run 519-539 (FLYI…MTVF), 565-585 (MIMF…PVFF), 607-627 (TPIS…VIGF), 638-658 (FLAL…IASL), 663-683 (VVAS…SGFI), 692-712 (WWIW…LAVN), and 751-771 (VGAL…CLIF). One can recognise an ABC transporter 2 domain in the interval 808–1059 (ITFEDIKYSI…ELIRYFEAIE (252 aa)). Residue 852–859 (GVSGAGKT) participates in ATP binding. Residues 1132–1346 (TQCLACLWKQ…TLNGLVTSQF (215 aa)) enclose the ABC transmembrane type-2 2 domain. Helical transmembrane passes span 1152-1172 (IAVK…MFWG), 1183-1199 (LFSA…TMGV), 1239-1259 (LPYI…MIGY), 1266-1286 (FFWY…YGMM), 1298-1318 (TVVS…LIPL), 1321-1341 (IPIW…LNGL), and 1373-1393 (LLWV…FLFG).

Belongs to the ABC transporter superfamily. ABCG family. PDR (TC 3.A.1.205) subfamily.

Its subcellular location is the membrane. Its function is as follows. May be a general defense protein. This chain is ABC transporter G family member 47, found in Oryza sativa subsp. japonica (Rice).